The following is a 472-amino-acid chain: Adenosylhomocysteinase (472 aa).

Substrate-binding residues include Thr-62, Asp-137, and Glu-197. 198–200 lines the NAD(+) pocket; the sequence is TTT. Residues Lys-227 and Asp-231 each coordinate substrate. Residues Asn-232, 261–266, Glu-284, Asn-319, 340–342, and Asn-385 contribute to the NAD(+) site; these read GYGDVG and IGH.

Belongs to the adenosylhomocysteinase family. NAD(+) is required as a cofactor.

It is found in the cytoplasm. It catalyses the reaction S-adenosyl-L-homocysteine + H2O = L-homocysteine + adenosine. It functions in the pathway amino-acid biosynthesis; L-homocysteine biosynthesis; L-homocysteine from S-adenosyl-L-homocysteine: step 1/1. May play a key role in the regulation of the intracellular concentration of adenosylhomocysteine. This chain is Adenosylhomocysteinase, found in Bordetella petrii (strain ATCC BAA-461 / DSM 12804 / CCUG 43448).